The primary structure comprises 150 residues: Flagellar assembly factor FliW (150 aa).

Belongs to the FliW family. As to quaternary structure, interacts with translational regulator CsrA and flagellin(s).

Its subcellular location is the cytoplasm. Acts as an anti-CsrA protein, binds CsrA and prevents it from repressing translation of its target genes, one of which is flagellin. Binds to flagellin and participates in the assembly of the flagellum. The polypeptide is Flagellar assembly factor FliW (Leptospira interrogans serogroup Icterohaemorrhagiae serovar copenhageni (strain Fiocruz L1-130)).